Consider the following 386-residue polypeptide: Probable pectin lyase E (386 aa).

The N-terminal stretch at Met-1 to Ala-16 is a signal peptide. Cys-77 and Cys-101 are joined by a disulfide. Asn-124 carries an N-linked (GlcNAc...) asparagine glycan. The active site involves Arg-251. A disulfide bridge connects residues Cys-326 and Cys-334.

This sequence belongs to the polysaccharide lyase 1 family.

Its subcellular location is the secreted. It carries out the reaction Eliminative cleavage of (1-&gt;4)-alpha-D-galacturonan methyl ester to give oligosaccharides with 4-deoxy-6-O-methyl-alpha-D-galact-4-enuronosyl groups at their non-reducing ends.. Pectinolytic enzymes consist of four classes of enzymes: pectin lyase, polygalacturonase, pectin methylesterase and rhamnogalacturonase. Among pectinolytic enzymes, pectin lyase is the most important in depolymerization of pectin, since it cleaves internal glycosidic bonds of highly methylated pectins. This is Probable pectin lyase E (pelE) from Aspergillus fumigatus (strain CBS 144.89 / FGSC A1163 / CEA10) (Neosartorya fumigata).